The sequence spans 320 residues: Very-long-chain 3-oxoacyl-CoA reductase (320 aa).

A helical membrane pass occupies residues 17–37 (FWYLGVVAAVWWGLRAAWCLL). 56 to 85 (GKWAVVTGATDGIGKAYAEELAKRGMNIVL) contacts NADP(+). The next 2 helical transmembrane spans lie at 189–209 (GVILNISSASGMYPVPLLTVY) and 283–303 (AIMGWISTSLVPVSTAISLGM). Ser196 is a binding site for substrate. Catalysis depends on Tyr209, which acts as the Proton acceptor.

Belongs to the short-chain dehydrogenases/reductases (SDR) family. 17-beta-HSD 3 subfamily.

The protein localises to the endoplasmic reticulum membrane. It catalyses the reaction a very-long-chain (3R)-3-hydroxyacyl-CoA + NADP(+) = a very-long-chain 3-oxoacyl-CoA + NADPH + H(+). The enzyme catalyses 17beta-estradiol + NAD(+) = estrone + NADH + H(+). It carries out the reaction 17beta-estradiol + NADP(+) = estrone + NADPH + H(+). The catalysed reaction is 3-oxooctadecanoyl-CoA + NADPH + H(+) = (3R)-hydroxyoctadecanoyl-CoA + NADP(+). It catalyses the reaction (7Z,10Z,13Z,16Z)-3-oxodocosatetraenoyl-CoA + NADPH + H(+) = (3R)-hydroxy-(7Z,10Z,13Z,16Z)-docosatetraenoyl-CoA + NADP(+). The enzyme catalyses 3-oxo-(7Z,10Z,13Z,16Z,19Z)-docosapentaenoyl-CoA + NADPH + H(+) = (3R)-hydroxy-(7Z,10Z,13Z,16Z,19Z)-docosapentaenoyl-CoA + NADP(+). It carries out the reaction (8Z,11Z,14Z)-3-oxoeicosatrienoyl-CoA + NADPH + H(+) = (3R)-hydroxy-(8Z,11Z,14Z)-eicosatrienoyl-CoA + NADP(+). The protein operates within lipid metabolism; fatty acid biosynthesis. Its pathway is steroid biosynthesis; estrogen biosynthesis. In terms of biological role, catalyzes the second of the four reactions of the long-chain fatty acids elongation cycle. This endoplasmic reticulum-bound enzymatic process, allows the addition of two carbons to the chain of long- and very long-chain fatty acids/VLCFAs per cycle. This enzyme has a 3-ketoacyl-CoA reductase activity, reducing 3-ketoacyl-CoA to 3-hydroxyacyl-CoA, within each cycle of fatty acid elongation. Thereby, it may participate in the production of VLCFAs of different chain lengths that are involved in multiple biological processes as precursors of membrane lipids and lipid mediators. May also catalyze the transformation of estrone (E1) into estradiol (E2) and play a role in estrogen formation. The sequence is that of Very-long-chain 3-oxoacyl-CoA reductase (hsd17b12) from Xenopus tropicalis (Western clawed frog).